The primary structure comprises 1097 residues: MTTTTTTTTRVASSSSTRNNRILKDANGDIGEHLRNHIHLTNCIHLKNNMHKQSPVLTDRALMRDLIVLQRSRSLRDPSASPPAWNTPPSVVDLLPKKGDLVEGGRRSVDLKKSSRRLSALSGSSPVVNFGTSKVTPSDERSGPVSGERDSGRRVKREESSRKSYRIGDDYQNVNEVVSHGSGSKASRRLSRVNDAMVKTLSDQLNEVVVGDSDDVVSSNVRPRVRYGGGGGGGNTRGCAGGMSRPKRRKFRGTRRVRGKSRDTGGGKSEMSVASNTLPQVEKHDGEKEGFGEQNMTKACGIPFNWSRIHHRGKTFLDKAGRSLSCGMSDSKGGRKGETNERNGSDKMMIQSDDDSSSFIGSDGEALPLLVDSGENDGWVHDYSGELGIFADSLLKNDEDSDLASEGRSGEKKHKKKSHVNARHRHRQQHQSLTEKYTPKTFRDLLGQNLVVQALSNAVARRKLGLLYVFHGPNGTGKTSCARIFARALNCHSMEQPKPCGTCSSCVSHDMGKSWNIREVGPVGNYDFEKIMDLLDGNVMVSSQSPRVFIFDDCDTLSSDCWNALSKVVDRAAPRHVVFILVCSSLDVLPHVIISRCQKFFFPKLKDADIVYSLQWIASKEEIEIDKDALKLIASRSDGSLRDAEMTLEQLSLLGQRISVPLVQELVGLVSDEKLVDLLDLALSADTVNTVKNLRTIMETSVEPLALMSQLATVITDILAGSYDFTKDQHKRKFFRRQPLPKEDMEKLRQALKTLSEAEKQLRVSNDKLTWLTAALLQLAPDQNYLLQRSSTADTGGRESSDHHLDPSSDAAGGRSSGLDRRRGDSRKNRPAVEEIWLEVIEKLRVNGLREFLYKEGRIVSLNLGSAPTVHLMFSSPLTKSTAEKFRSHIMQAFEAVLESPVTIEIRCETKKDPRNNVHHHHHHPTVKDKSLPQSLALIGHDYNIDGSGRSEIVEVTESNGQRRQQQKQQEEERTEPVGSSALARARRKHLEASQSQNQSQSIVRGKVSLAHVIQQADGCSLQNGWSKRKAVSIAEKLEQENLRLEPRSRSLLCWKSSRGTRRKATRLKVRTRRARPHTLLKLVSCGKCLSTRSPTR.

Disordered regions lie at residues Met-1–Ile-22, Ser-74–Gly-168, Asn-220–Glu-293, Gly-321–Ser-358, and Asp-400–Lys-436. The span at Arg-10–Asn-20 shows a compositional bias: polar residues. A compositionally biased stretch (basic and acidic residues) spans Leu-95–Lys-113. Residues Pro-126 to Thr-136 are compositionally biased toward polar residues. Over residues Pro-137–Gly-168 the composition is skewed to basic and acidic residues. Residues Tyr-227–Gly-241 are compositionally biased toward gly residues. Positions Arg-245–Gly-259 are enriched in basic residues. Composition is skewed to basic and acidic residues over residues Val-281–Phe-291 and Lys-332–Ser-345. The segment covering Asp-346–Ser-358 has biased composition (low complexity). The span at Glu-411 to Gln-429 shows a compositional bias: basic residues. Gly-472 to Thr-479 contacts ATP. Residues Cys-491, Cys-500, Cys-503, and Cys-506 each contribute to the Zn(2+) site. Positions Lys-742–Thr-770 form a coiled coil. 3 disordered regions span residues Ser-790–Lys-828, Asp-913–Leu-932, and Val-956–Ile-1003. 2 stretches are compositionally biased toward basic and acidic residues: residues Gly-796 to Pro-807 and Gly-818 to Lys-828. Residues Ala-993–Ile-1003 show a composition bias toward polar residues.

It belongs to the DnaX/STICHEL family.

This is Protein STICHEL-like 3 from Arabidopsis thaliana (Mouse-ear cress).